The chain runs to 593 residues: Cryptochrome-2 (593 aa).

The 130-residue stretch at 22-151 folds into the Photolyase/cryptochrome alpha/beta domain; that stretch reads ASSVHWFRKG…EVVTENSHTL (130 aa). Lysine 30 participates in a covalent cross-link: Glycyl lysine isopeptide (Lys-Gly) (interchain with G-Cter in ubiquitin). Position 90 is a phosphoserine (serine 90). Residues lysine 126 and lysine 242 each participate in a glycyl lysine isopeptide (Lys-Gly) (interchain with G-Cter in ubiquitin) cross-link. Position 266 is a phosphoserine; by MAPK (serine 266). An FAD-binding site is contributed by serine 271. Residue serine 299 is modified to Phosphoserine. Glutamine 308 is an FAD binding site. Lysine 348 participates in a covalent cross-link: Glycyl lysine isopeptide (Lys-Gly) (interchain with G-Cter in ubiquitin). FAD is bound by residues histidine 374 and 406-408; that span reads DAD. The tract at residues 390-489 is required for inhibition of CLOCK-BMAL1-mediated transcription; the sequence is WVSWESGVRV…IIGVDYPRPI (100 aa). Glycyl lysine isopeptide (Lys-Gly) (interchain with G-Cter in ubiquitin) cross-links involve residues lysine 475 and lysine 504. Residues 532–593 form a disordered region; the sequence is PVAEPSSSQA…PTPELPSKDA (62 aa). Residues 537–548 are compositionally biased toward low complexity; that stretch reads SSSQAGSMSSAG. Serine 554 is subject to Phosphoserine; by GSK3-beta. Serine 558 carries the phosphoserine; by DYRK1A and MAPK modification.

Belongs to the DNA photolyase class-1 family. Component of the circadian core oscillator, which includes the CRY proteins, CLOCK or NPAS2, BMAL1 or BMAL2, CSNK1D and/or CSNK1E, TIMELESS, and the PER proteins. Interacts with TIMELESS. Interacts directly with PER1, PER2 and PER3; interaction with PER2 inhibits its ubiquitination and vice versa. Interacts with CLOCK-BMAL1. Interacts with CLOCK. Interacts with BMAL1. Interacts with NFIL3. Interacts with FBXL3. Interacts with FBXL21. FBXL3, PER2 and the cofactor FAD compete for overlapping binding sites. FBXL3 cannot bind CRY2 that interacts already with PER2 or that contains bound FAD. Interacts with PPP5C (via TPR repeats); the interaction down-regulates the PPP5C phosphatase activity on CSNK1E. Interacts with nuclear receptors AR and NR3C1/GR; the interaction is ligand dependent. Interacts with PRKDC and CIART. Interacts with ISCA1 (in vitro). Interacts with DDB1, USP7 and TARDBP. Interacts with HNF4A. Interacts with PPARA. Interacts with PPARD (via domain NR LBD) and NR1I2 (via domain NR LBD) in a ligand-dependent manner. Interacts with PPARG, NR1I3 and VDR in a ligand-dependent manner. Requires FAD as cofactor. It depends on (6R)-5,10-methylene-5,6,7,8-tetrahydrofolate as a cofactor. In terms of processing, phosphorylation on Ser-266 by MAPK is important for the inhibition of CLOCK-BMAL1-mediated transcriptional activity. Phosphorylation by CSKNE requires interaction with PER1 or PER2. Phosphorylated in a circadian manner at Ser-554 and Ser-558 in the suprachiasmatic nucleus (SCN) and liver. Phosphorylation at Ser-558 by DYRK1A promotes subsequent phosphorylation at Ser-554 by GSK3-beta: the two-step phosphorylation at the neighboring Ser residues leads to its proteasomal degradation. Post-translationally, ubiquitinated by the SCF(FBXL3) and SCF(FBXL21) complexes, regulating the balance between degradation and stabilization. The SCF(FBXL3) complex is mainly nuclear and mediates ubiquitination and subsequent degradation of CRY2. In contrast, cytoplasmic SCF(FBXL21) complex-mediated ubiquitination leads to stabilize CRY2 and counteract the activity of the SCF(FBXL3) complex. The SCF(FBXL3) and SCF(FBXL21) complexes probably mediate ubiquitination at different Lys residues. The SCF(FBXL3) complex recognizes and binds CRY2 phosphorylated at Ser-554 and Ser-558. Ubiquitination may be inhibited by PER2. Deubiquitinated by USP7. Expressed in all tissues examined including fetal brain, fibroblasts, heart, brain, placenta, lung, liver, skeletal muscle, kidney, pancreas, spleen, thymus, prostate, testis, ovary, small intestine, colon and leukocytes. Highest levels in heart and skeletal muscle.

It is found in the cytoplasm. It localises to the nucleus. KL001 (N-[3-(9H-carbazol-9-yl)-2-hydroxypropyl]-N-(2-furanylmethyl)-methanesulfonamide) binds to CRY1 and stabilizes it by inhibiting FBXL3- and ubiquitin-dependent degradation of CRY1 resulting in lengthening of the circadian periods. Transcriptional repressor which forms a core component of the circadian clock. The circadian clock, an internal time-keeping system, regulates various physiological processes through the generation of approximately 24 hour circadian rhythms in gene expression, which are translated into rhythms in metabolism and behavior. It is derived from the Latin roots 'circa' (about) and 'diem' (day) and acts as an important regulator of a wide array of physiological functions including metabolism, sleep, body temperature, blood pressure, endocrine, immune, cardiovascular, and renal function. Consists of two major components: the central clock, residing in the suprachiasmatic nucleus (SCN) of the brain, and the peripheral clocks that are present in nearly every tissue and organ system. Both the central and peripheral clocks can be reset by environmental cues, also known as Zeitgebers (German for 'timegivers'). The predominant Zeitgeber for the central clock is light, which is sensed by retina and signals directly to the SCN. The central clock entrains the peripheral clocks through neuronal and hormonal signals, body temperature and feeding-related cues, aligning all clocks with the external light/dark cycle. Circadian rhythms allow an organism to achieve temporal homeostasis with its environment at the molecular level by regulating gene expression to create a peak of protein expression once every 24 hours to control when a particular physiological process is most active with respect to the solar day. Transcription and translation of core clock components (CLOCK, NPAS2, BMAL1, BMAL2, PER1, PER2, PER3, CRY1 and CRY2) plays a critical role in rhythm generation, whereas delays imposed by post-translational modifications (PTMs) are important for determining the period (tau) of the rhythms (tau refers to the period of a rhythm and is the length, in time, of one complete cycle). A diurnal rhythm is synchronized with the day/night cycle, while the ultradian and infradian rhythms have a period shorter and longer than 24 hours, respectively. Disruptions in the circadian rhythms contribute to the pathology of cardiovascular diseases, cancer, metabolic syndromes and aging. A transcription/translation feedback loop (TTFL) forms the core of the molecular circadian clock mechanism. Transcription factors, CLOCK or NPAS2 and BMAL1 or BMAL2, form the positive limb of the feedback loop, act in the form of a heterodimer and activate the transcription of core clock genes and clock-controlled genes (involved in key metabolic processes), harboring E-box elements (5'-CACGTG-3') within their promoters. The core clock genes: PER1/2/3 and CRY1/2 which are transcriptional repressors form the negative limb of the feedback loop and interact with the CLOCK|NPAS2-BMAL1|BMAL2 heterodimer inhibiting its activity and thereby negatively regulating their own expression. This heterodimer also activates nuclear receptors NR1D1/2 and RORA/B/G, which form a second feedback loop and which activate and repress BMAL1 transcription, respectively. CRY1 and CRY2 have redundant functions but also differential and selective contributions at least in defining the pace of the SCN circadian clock and its circadian transcriptional outputs. Less potent transcriptional repressor in cerebellum and liver than CRY1, though less effective in lengthening the period of the SCN oscillator. Seems to play a critical role in tuning SCN circadian period by opposing the action of CRY1. With CRY1, dispensable for circadian rhythm generation but necessary for the development of intercellular networks for rhythm synchrony. May mediate circadian regulation of cAMP signaling and gluconeogenesis by blocking glucagon-mediated increases in intracellular cAMP concentrations and in CREB1 phosphorylation. Besides its role in the maintenance of the circadian clock, is also involved in the regulation of other processes. Plays a key role in glucose and lipid metabolism modulation, in part, through the transcriptional regulation of genes involved in these pathways, such as LEP or ACSL4. Represses glucocorticoid receptor NR3C1/GR-induced transcriptional activity by binding to glucocorticoid response elements (GREs). Represses the CLOCK-BMAL1 induced transcription of BHLHE40/DEC1. Represses the CLOCK-BMAL1 induced transcription of NAMPT. Represses PPARD and its target genes in the skeletal muscle and limits exercise capacity. Represses the transcriptional activity of NR1I2. The protein is Cryptochrome-2 (CRY2) of Homo sapiens (Human).